The following is a 171-amino-acid chain: Co-chaperone protein HscB (171 aa).

Residues 2–74 enclose the J domain; sequence DYFTLFGLPA…LMRAEYLLSL (73 aa).

This sequence belongs to the HscB family. In terms of assembly, interacts with HscA and stimulates its ATPase activity. Interacts with IscU.

Its function is as follows. Co-chaperone involved in the maturation of iron-sulfur cluster-containing proteins. Seems to help targeting proteins to be folded toward HscA. The protein is Co-chaperone protein HscB of Escherichia coli (strain SMS-3-5 / SECEC).